The chain runs to 369 residues: uncharacterized protein (369 aa).

9 helical membrane-spanning segments follow: residues 25–45 (QFVALSIWIILITLFSLWYDW), 47–67 (FCLLNLTIVGFFIAFCYFVPA), 119–139 (LNIVHLFVISGFHLSFLFNLM), 152–172 (LSGFAVLLIYLFLVGFAFSAL), 206–226 (HALNNFGFNFSFLACFVLLFV), 235–255 (LKPLVSSSLILIVISPLSLYL), 272–292 (PIALFYFCVSWIILPFIGVFG), 296–316 (FGIYLPLKMLSEWSLKVTVFL), and 323–343 (LIFFFVYYGLLGLLYTIFTVA).

The protein to B.subtilis ComEC.

It localises to the cell membrane. This is an uncharacterized protein from Mycoplasma genitalium (strain ATCC 33530 / DSM 19775 / NCTC 10195 / G37) (Mycoplasmoides genitalium).